A 526-amino-acid polypeptide reads, in one-letter code: Zinc finger protein Helios (526 aa).

The interval 28-94 (DLTSSTPNGQ…IESSEVADNR (67 aa)) is disordered. Over residues 29–50 (LTSSTPNGQHASPSHMTSTNSV) the composition is skewed to polar residues. The residue at position 56 (Ser-56) is a Phosphoserine. The segment covering 61–77 (DRQPLSREDEIRGHDEG) has biased composition (basic and acidic residues). Phosphoserine is present on residues Ser-78 and Ser-79. Residue Lys-95 forms a Glycyl lysine isopeptide (Lys-Gly) (interchain with G-Cter in SUMO2) linkage. 4 consecutive C2H2-type zinc fingers follow at residues 112–134 (LKCD…KRSH), 140–162 (FHCN…IKLH), 168–190 (FKCP…LRTH), and 196–219 (HKCN…ERCH). Lys-288 is modified (N6-acetyllysine). Over residues 368–379 (ISRETSDSHENN) the composition is skewed to basic and acidic residues. Positions 368–435 (ISRETSDSHE…LNPKRKQSPA (68 aa)) are disordered. Residues Lys-442 and Lys-448 each participate in a glycyl lysine isopeptide (Lys-Gly) (interchain with G-Cter in SUMO2) cross-link. C2H2-type zinc fingers lie at residues 471-493 (FKCE…MGCH) and 499-523 (LECN…RGEH).

This sequence belongs to the Ikaros C2H2-type zinc-finger protein family. Can form homodimers. Interacts with IKZF4 and IKZF5. As to expression, expressed in outer hair cells (OHC) of the organ of Corti. Abundant in thymus, low expression in bone marrow and brain and no detectable expression in spleen, liver, kidney or muscle. Expressed in T-cells.

The protein resides in the nucleus. Its function is as follows. Transcriptional regulator required for outer hair cells (OHC) maturation and, consequently, for hearing. In Mus musculus (Mouse), this protein is Zinc finger protein Helios (Ikzf2).